A 243-amino-acid polypeptide reads, in one-letter code: Probable 2-phosphosulfolactate phosphatase (243 aa).

This sequence belongs to the ComB family. It depends on Mg(2+) as a cofactor.

It carries out the reaction (2R)-O-phospho-3-sulfolactate + H2O = (2R)-3-sulfolactate + phosphate. The polypeptide is Probable 2-phosphosulfolactate phosphatase (Synechococcus sp. (strain CC9605)).